A 492-amino-acid polypeptide reads, in one-letter code: Tumor necrosis factor receptor superfamily member 8 (492 aa).

An N-terminal signal peptide occupies residues 1–18; it reads MSILLKAAGLLFLGMLQA. Over 19 to 282 the chain is Extracellular; it reads FPKDRPLDTT…STGTPFLDPG (264 aa). TNFR-Cys repeat units follow at residues 57–104 and 105–141; these read PCPQ…PRIC and ECQP…NTIC. Disulfide bonds link Cys58/Cys80, Cys83/Cys96, Cys86/Cys104, and Cys123/Cys141. Residues 141–178 are disordered; sequence CDLPSPGSGPNGSNPDDCKTLTSHTTPQAIPTLESPAN. The segment covering 144–155 has biased composition (low complexity); sequence PSPGSGPNGSNP. N-linked (GlcNAc...) asparagine glycans are attached at residues Asn151, Asn178, and Asn224. Residues 160–178 are compositionally biased toward polar residues; it reads TLTSHTTPQAIPTLESPAN. Residues 283–303 traverse the membrane as a helical segment; it reads SMLFWVAMVVLLVGSASFLLC. Residues 304-492 are Cytoplasmic-facing; sequence YWKACRRRFQ…DHEPTTVSEK (189 aa). 2 positions are modified to phosphoserine: Ser334 and Ser348. Disordered stretches follow at residues 336–366 and 432–492; these read PTEK…PPAV and PEGR…VSEK. Residues 339 to 360 are compositionally biased toward polar residues; the sequence is KLTQLQRSGSVTDSSAGHTLSP. Basic and acidic residues-rich tracts occupy residues 450 to 459 and 478 to 492; these read EVDHTPHYPE and EGGK…VSEK.

It belongs to the TNFR8 family. As to quaternary structure, interacts with TRAF1, TRAF2, TRAF3 and TRAF5. Very low level of expression. Detected in spleen, thymus and lung. Highly expressed in HTLV-1 infected T-cell lines.

The protein resides in the cell membrane. Its function is as follows. Receptor for TNFSF8/CD30L. May play a role in the regulation of cellular growth and transformation of activated lymphoblasts. Regulates gene expression through activation of NF-kappa-B. The protein is Tumor necrosis factor receptor superfamily member 8 of Rattus norvegicus (Rat).